We begin with the raw amino-acid sequence, 511 residues long: Maturase K (511 aa).

Belongs to the intron maturase 2 family. MatK subfamily.

The protein resides in the plastid. The protein localises to the chloroplast. In terms of biological role, usually encoded in the trnK tRNA gene intron. Probably assists in splicing its own and other chloroplast group II introns. The protein is Maturase K of Nardus stricta (Mat-grass).